A 371-amino-acid polypeptide reads, in one-letter code: Glutamate 5-kinase (371 aa).

K14 serves as a coordination point for ATP. Substrate contacts are provided by S52, D139, and N151. Residue 171–172 coordinates ATP; it reads SD. In terms of domain architecture, PUA spans 275–353; sequence EGRLHLDSGA…ADLAMELGPS (79 aa).

Belongs to the glutamate 5-kinase family.

It is found in the cytoplasm. It carries out the reaction L-glutamate + ATP = L-glutamyl 5-phosphate + ADP. The protein operates within amino-acid biosynthesis; L-proline biosynthesis; L-glutamate 5-semialdehyde from L-glutamate: step 1/2. In terms of biological role, catalyzes the transfer of a phosphate group to glutamate to form L-glutamate 5-phosphate. In Frankia casuarinae (strain DSM 45818 / CECT 9043 / HFP020203 / CcI3), this protein is Glutamate 5-kinase.